The primary structure comprises 215 residues: Glycerol-3-phosphate acyltransferase (215 aa).

Helical transmembrane passes span 1–21 (MAFL…SIPT), 57–77 (IFVL…VKLW), 85–105 (MIPL…AVLG), 126–146 (VLLV…LAML), and 165–185 (VLMF…IVGL).

It belongs to the PlsY family. Probably interacts with PlsX.

It localises to the cell inner membrane. The catalysed reaction is an acyl phosphate + sn-glycerol 3-phosphate = a 1-acyl-sn-glycero-3-phosphate + phosphate. It participates in lipid metabolism; phospholipid metabolism. In terms of biological role, catalyzes the transfer of an acyl group from acyl-phosphate (acyl-PO(4)) to glycerol-3-phosphate (G3P) to form lysophosphatidic acid (LPA). This enzyme utilizes acyl-phosphate as fatty acyl donor, but not acyl-CoA or acyl-ACP. The protein is Glycerol-3-phosphate acyltransferase of Crocosphaera subtropica (strain ATCC 51142 / BH68) (Cyanothece sp. (strain ATCC 51142)).